The chain runs to 366 residues: tRNA/tmRNA (uracil-C(5))-methyltransferase (366 aa).

Residues Q190, Y218, N223, E239, and D299 each coordinate S-adenosyl-L-methionine. Catalysis depends on C324, which acts as the Nucleophile. E358 serves as the catalytic Proton acceptor.

Belongs to the class I-like SAM-binding methyltransferase superfamily. RNA M5U methyltransferase family. TrmA subfamily.

It carries out the reaction uridine(54) in tRNA + S-adenosyl-L-methionine = 5-methyluridine(54) in tRNA + S-adenosyl-L-homocysteine + H(+). It catalyses the reaction uridine(341) in tmRNA + S-adenosyl-L-methionine = 5-methyluridine(341) in tmRNA + S-adenosyl-L-homocysteine + H(+). Dual-specificity methyltransferase that catalyzes the formation of 5-methyluridine at position 54 (m5U54) in all tRNAs, and that of position 341 (m5U341) in tmRNA (transfer-mRNA). The sequence is that of tRNA/tmRNA (uracil-C(5))-methyltransferase from Klebsiella pneumoniae (strain 342).